Consider the following 177-residue polypeptide: Large ribosomal subunit protein uL6 (177 aa).

The protein belongs to the universal ribosomal protein uL6 family. In terms of assembly, part of the 50S ribosomal subunit.

Its function is as follows. This protein binds to the 23S rRNA, and is important in its secondary structure. It is located near the subunit interface in the base of the L7/L12 stalk, and near the tRNA binding site of the peptidyltransferase center. This chain is Large ribosomal subunit protein uL6, found in Ectopseudomonas mendocina (strain ymp) (Pseudomonas mendocina).